Here is a 212-residue protein sequence, read N- to C-terminus: Noggin-2 (212 aa).

A signal peptide spans 1 to 23 (MGSITRALPLLLLLLLCAHGTAS). The interval 37 to 56 (LPVPDLIENPDPEHDPREQD) is disordered. Residues 47–56 (DPEHDPREQD) show a composition bias toward basic and acidic residues. Asparagine 84 carries N-linked (GlcNAc...) asparagine glycosylation.

This sequence belongs to the noggin family. As to quaternary structure, homodimer; disulfide-linked.

The protein resides in the secreted. Functionally, inhibitor of bone morphogenetic proteins (BMP) signaling. This is Noggin-2 (nog2) from Danio rerio (Zebrafish).